Reading from the N-terminus, the 794-residue chain is Phenylalanine--tRNA ligase beta subunit (794 aa).

Residues 40 to 158 enclose the tRNA-binding domain; the sequence is NSLNSELILG…LKKYIGSDVK (119 aa). Positions 402–477 constitute a B5 domain; that stretch reads KNKQSLEIKL…RLYSYDKIDE (76 aa). Mg(2+) is bound by residues Asp-455, Asp-461, Glu-464, and Glu-465. The region spanning 702 to 794 is the FDX-ACB domain; sequence SKFQSSSRDL…NIKQMKVVIR (93 aa).

This sequence belongs to the phenylalanyl-tRNA synthetase beta subunit family. Type 1 subfamily. As to quaternary structure, tetramer of two alpha and two beta subunits. Requires Mg(2+) as cofactor.

The protein resides in the cytoplasm. It catalyses the reaction tRNA(Phe) + L-phenylalanine + ATP = L-phenylalanyl-tRNA(Phe) + AMP + diphosphate + H(+). This Mycoplasma mycoides subsp. mycoides SC (strain CCUG 32753 / NCTC 10114 / PG1) protein is Phenylalanine--tRNA ligase beta subunit.